A 360-amino-acid chain; its full sequence is MSRVYNFSAGPAAIPEEVLFTVRDELLDWHGIGMSIAEVSHRGEEFIGVAEEAERDLRELLAVPESYHILFLQGGSRLQFAMVPMNLLANHKKAVYIDSGVWSNLAIREAKNYCDPHLATNAKELNYTGIPDQATWDMPNEAAYFYYVDNETVNGIEFPFIPDTHLTLVCDMSSNLLSRPFDVSRYGLIFACAQKNMGLAGLTIVIVHDDLLKRSPLPTTPSYLQYALHAKERSFINTPPTFAWYLAGLIFKWVKNQGGVAVLAERNQRKAAKLYKFIDKSNFFDNPINPTYRSRMNVIFRLADERLNSLFLKEATENGLANLKGHRLLGGMRASIYNAMTEEGVDALINFMGQFEKRHG.

R42 serves as a coordination point for L-glutamate. Positions 102, 152, 171, and 194 each coordinate pyridoxal 5'-phosphate. K195 is subject to N6-(pyridoxal phosphate)lysine. 237–238 serves as a coordination point for pyridoxal 5'-phosphate; the sequence is NT.

It belongs to the class-V pyridoxal-phosphate-dependent aminotransferase family. SerC subfamily. As to quaternary structure, homodimer. Pyridoxal 5'-phosphate is required as a cofactor.

The protein localises to the cytoplasm. It catalyses the reaction O-phospho-L-serine + 2-oxoglutarate = 3-phosphooxypyruvate + L-glutamate. The enzyme catalyses 4-(phosphooxy)-L-threonine + 2-oxoglutarate = (R)-3-hydroxy-2-oxo-4-phosphooxybutanoate + L-glutamate. The protein operates within amino-acid biosynthesis; L-serine biosynthesis; L-serine from 3-phospho-D-glycerate: step 2/3. It functions in the pathway cofactor biosynthesis; pyridoxine 5'-phosphate biosynthesis; pyridoxine 5'-phosphate from D-erythrose 4-phosphate: step 3/5. Catalyzes the reversible conversion of 3-phosphohydroxypyruvate to phosphoserine and of 3-hydroxy-2-oxo-4-phosphonooxybutanoate to phosphohydroxythreonine. This Coxiella burnetii (strain CbuK_Q154) (Coxiella burnetii (strain Q154)) protein is Phosphoserine aminotransferase.